Consider the following 88-residue polypeptide: MKKTALLAALCSVVSLSSCCRIVDCCFEDPCAPIKCSPCESKKREVNGGCNSCNGYVPSCKPCGGELDHETKQGPQARGIQADGRCRQ.

Positions 1–18 (MKKTALLAALCSVVSLSS) are cleaved as a signal peptide. Cys19 carries the N-palmitoyl cysteine lipid modification. Cys19 carries the S-diacylglycerol cysteine lipid modification.

As to quaternary structure, part of a disulfide cross-linked outer membrane complex (COMC) composed of the major outer membrane porin (MOMP), the small cysteine-rich protein (OmcA) and the large cysteine-rich periplasmic protein (OmcB).

It is found in the cell outer membrane. In elementary bodies (EBs, the infectious stage, which is able to survive outside the host cell) provides the structural integrity of the outer envelope through disulfide cross-links with the large cysteine-rich periplasmic protein and the major outer membrane porin. It has been described in publications as the Sarkosyl-insoluble COMC (Chlamydia outer membrane complex), and serves as the functional equivalent of peptidoglycan. This chain is Small cysteine-rich outer membrane protein OmcA (omcA), found in Chlamydia muridarum (strain MoPn / Nigg).